A 1035-amino-acid polypeptide reads, in one-letter code: Teashirt homolog 2 (1035 aa).

Positions 1–92 (MPRRKQQAPK…ESLLSDASDQ (92 aa)) are disordered. Residues 13–42 (AGYAQEEQLKEEEEIKEEEEEEEDSGSVAQ) adopt a coiled-coil conformation. Residues 21–37 (LKEEEEIKEEEEEEEDS) show a composition bias toward acidic residues. 2 stretches are compositionally biased toward polar residues: residues 39–49 (SVAQLQGSNDP) and 66–92 (SYQN…ASDQ). Lys189 participates in a covalent cross-link: Glycyl lysine isopeptide (Lys-Gly) (interchain with G-Cter in SUMO2). 2 C2H2-type zinc fingers span residues 216–240 (FRCR…ETGH) and 276–300 (LKCM…KTKH). Residues 240–266 (HYQDDNRKKDKLRPTSYSKPRKRAFQD) are disordered. Residues Lys307 and Lys316 each participate in a glycyl lysine isopeptide (Lys-Gly) (interchain with G-Cter in SUMO2) cross-link. The segment at 381 to 405 (LKCMECGSSHDTLQQLTTHMMVTGH) adopts a C2H2-type 3; atypical zinc-finger fold. Lys418 participates in a covalent cross-link: Glycyl lysine isopeptide (Lys-Gly) (interchain with G-Cter in SUMO2). The span at 432-450 (SLSDAPSSDSLAPKPSSNS) shows a compositional bias: low complexity. The disordered stretch occupies residues 432–496 (SLSDAPSSDS…DPLQKPLDPA (65 aa)). The segment covering 460–483 (ELKRESKKEKPEELRTDEKVLKSE) has biased composition (basic and acidic residues). Residues Lys462, Lys481, Lys498, and Lys602 each participate in a glycyl lysine isopeptide (Lys-Gly) (interchain with G-Cter in SUMO2) cross-link. Disordered stretches follow at residues 600–674 (QVKK…VEPV) and 764–791 (QPID…PQKH). Basic and acidic residues predominate over residues 601–669 (VKKEPEDKEE…KDGGEKEKAQ (69 aa)). Glycyl lysine isopeptide (Lys-Gly) (interchain with G-Cter in SUMO2) cross-links involve residues Lys801 and Lys821. The segment at residues 842-912 (RKGRQSNWNP…NVKYQLRKTG (71 aa)) is a DNA-binding region (homeobox). The C2H2-type 4 zinc finger occupies 927 to 949 (FYCSDCASQFRTPSTYISHLESH). A compositionally biased stretch (low complexity) spans 968–977 (VEQEISRVSS). Disordered regions lie at residues 968–987 (VEQE…TIAG) and 1015–1035 (SKTH…VDEE). Ser981 carries the post-translational modification Phosphoserine. A C2H2-type 5 zinc finger spans residues 995 to 1018 (FKCKLCCRTFVSKHAVKLHLSKTH).

It belongs to the teashirt C2H2-type zinc-finger protein family. As to quaternary structure, interacts (via homeobox domain) with APBB1 (via PID domain 1). Post-translationally, sumoylated.

It is found in the nucleus. Its function is as follows. Probable transcriptional regulator involved in developmental processes. May act as a transcriptional repressor (Potential). In Sus scrofa (Pig), this protein is Teashirt homolog 2 (TSHZ2).